We begin with the raw amino-acid sequence, 427 residues long: Extracellular superoxide dismutase [Cu-Zn] 2 (427 aa).

An N-terminal signal peptide occupies residues 1–20 (MNKLIISLLIVLSAISIISA). At 21–406 (DYQYGYCKFG…PTETSQPGTS (386 aa)) the chain is on the extracellular side. 5 N-linked (GlcNAc...) asparagine glycosylation sites follow: Asn-38, Asn-57, Asn-81, Asn-190, and Asn-218. Residues His-257, His-259, and His-275 each coordinate Cu cation. The Zn(2+) site is built by His-275 and His-283. Residue Asn-288 is glycosylated (N-linked (GlcNAc...) asparagine). Residues His-292 and Asp-295 each contribute to the Zn(2+) site. A Cu cation-binding site is contributed by His-331. Asn-376 carries N-linked (GlcNAc...) asparagine glycosylation. Residues 381–404 (GESTIEPSPTPSTTPTPTETSQPG) form a disordered region. Over residues 395–404 (PTPTETSQPG) the composition is skewed to low complexity. Residues 407-426 (SYLAPFFVLILSSLISVILI) form a helical membrane-spanning segment. A topological domain (cytoplasmic) is located at residue Leu-427.

The protein belongs to the Cu-Zn superoxide dismutase family. The cofactor is Cu cation. Zn(2+) is required as a cofactor.

Its subcellular location is the cell membrane. It carries out the reaction 2 superoxide + 2 H(+) = H2O2 + O2. In terms of biological role, protect the extracellular space from toxic effect of reactive oxygen intermediates by converting superoxyde radicals into hydrogen peroxyde and oxygen. The chain is Extracellular superoxide dismutase [Cu-Zn] 2 (sodB) from Dictyostelium discoideum (Social amoeba).